Reading from the N-terminus, the 356-residue chain is Phosphate acyltransferase (356 aa).

Belongs to the PlsX family. Homodimer. Probably interacts with PlsY.

It is found in the cytoplasm. It catalyses the reaction a fatty acyl-[ACP] + phosphate = an acyl phosphate + holo-[ACP]. Its pathway is lipid metabolism; phospholipid metabolism. Catalyzes the reversible formation of acyl-phosphate (acyl-PO(4)) from acyl-[acyl-carrier-protein] (acyl-ACP). This enzyme utilizes acyl-ACP as fatty acyl donor, but not acyl-CoA. This chain is Phosphate acyltransferase, found in Shigella sonnei (strain Ss046).